The sequence spans 91 residues: Insertion element IS1 1 protein InsA (91 aa).

The protein belongs to the IS1 elements InsA family.

Functionally, absolutely required for transposition of IS1. This is Insertion element IS1 1 protein InsA (insA1) from Escherichia coli (strain K12).